We begin with the raw amino-acid sequence, 154 residues long: Low molecular weight protein-tyrosine-phosphatase PtpA (154 aa).

Cysteine 8 serves as the catalytic Nucleophile. The active site involves arginine 14. Catalysis depends on aspartate 120, which acts as the Proton donor.

This sequence belongs to the low molecular weight phosphotyrosine protein phosphatase family. Interacts with host CORO1A. In terms of processing, phosphorylations at Tyr-122 and Tyr-123 are essential for phosphatase activity.

The protein localises to the secreted. It carries out the reaction O-phospho-L-tyrosyl-[protein] + H2O = L-tyrosyl-[protein] + phosphate. Functionally, secreted tyrosine phosphatase that plays a critical role during infection as a bacterial effector protein that counteracts host defenses. Required for intramacrophage survival. This Staphylococcus aureus (strain MSSA476) protein is Low molecular weight protein-tyrosine-phosphatase PtpA (ptpA).